We begin with the raw amino-acid sequence, 222 residues long: 7-carboxy-7-deazaguanine synthase (222 aa).

Substrate is bound by residues 16–18 (LQG) and Arg-31. The region spanning 22–222 (NLGRPAVFVR…IMAWGNARGK (201 aa)) is the Radical SAM core domain. Positions 35, 39, and 42 each coordinate [4Fe-4S] cluster. Thr-44 is a Mg(2+) binding site. Thr-77 serves as a coordination point for substrate. Residues Gly-79 and 126–128 (SPK) contribute to the S-adenosyl-L-methionine site.

This sequence belongs to the radical SAM superfamily. 7-carboxy-7-deazaguanine synthase family. Homodimer. [4Fe-4S] cluster serves as cofactor. Requires S-adenosyl-L-methionine as cofactor. The cofactor is Mg(2+).

The catalysed reaction is 6-carboxy-5,6,7,8-tetrahydropterin + H(+) = 7-carboxy-7-deazaguanine + NH4(+). It functions in the pathway purine metabolism; 7-cyano-7-deazaguanine biosynthesis. Functionally, catalyzes the complex heterocyclic radical-mediated conversion of 6-carboxy-5,6,7,8-tetrahydropterin (CPH4) to 7-carboxy-7-deazaguanine (CDG), a step common to the biosynthetic pathways of all 7-deazapurine-containing compounds. The chain is 7-carboxy-7-deazaguanine synthase from Pyrobaculum aerophilum (strain ATCC 51768 / DSM 7523 / JCM 9630 / CIP 104966 / NBRC 100827 / IM2).